A 193-amino-acid chain; its full sequence is Thioredoxin peroxidase (193 aa).

In terms of domain architecture, Thioredoxin spans alanine 3–phenylalanine 161. The active-site Cysteine sulfenic acid (-SOH) intermediate is the cysteine 48.

This sequence belongs to the peroxiredoxin family. AhpC/Prx1 subfamily. As to quaternary structure, homodimer; disulfide-linked, upon oxidation.

It catalyses the reaction a hydroperoxide + [thioredoxin]-dithiol = an alcohol + [thioredoxin]-disulfide + H2O. Its function is as follows. Thiol-specific peroxidase that catalyzes the reduction of hydrogen peroxide and organic hydroperoxides to water and alcohols, respectively. Plays a role in cell protection against oxidative stress by detoxifying peroxides and as sensor of hydrogen peroxide-mediated signaling events. In Echinococcus granulosus (Hydatid tapeworm), this protein is Thioredoxin peroxidase (TPX).